Here is an 889-residue protein sequence, read N- to C-terminus: Alanine--tRNA ligase (889 aa).

Zn(2+) contacts are provided by H587, H591, C691, and H695. 2 disordered regions span residues 734–760 and 866–889; these read QQEQ…EENK and AQGG…MILG. Residues 872 to 881 are compositionally biased toward basic and acidic residues; the sequence is DTSKKDEAIS.

This sequence belongs to the class-II aminoacyl-tRNA synthetase family. Zn(2+) is required as a cofactor.

It localises to the cytoplasm. The enzyme catalyses tRNA(Ala) + L-alanine + ATP = L-alanyl-tRNA(Ala) + AMP + diphosphate. Its function is as follows. Catalyzes the attachment of alanine to tRNA(Ala) in a two-step reaction: alanine is first activated by ATP to form Ala-AMP and then transferred to the acceptor end of tRNA(Ala). Also edits incorrectly charged Ser-tRNA(Ala) and Gly-tRNA(Ala) via its editing domain. This chain is Alanine--tRNA ligase, found in Nitrosopumilus maritimus (strain SCM1).